A 495-amino-acid chain; its full sequence is Nitrogen fixation regulatory protein (495 aa).

Positions 23 to 93 constitute a PAS 1 domain; the sequence is HPGLFFTMVE…QEMWQTLLQR (71 aa). The region spanning 94-148 is the PAC domain; that stretch reads QPWRGQLINQARDGGLYLVDIDITPVLNPQGELEHYLAMQRDISVSYTLEQRLRN. The PAS 2; truncated domain maps to 151–174; the sequence is TLMEAVLNNIPAAVVVVDEQDRVV.

The cofactor is FAD.

Its function is as follows. Required for the inhibition of NifA activity in response to oxygen and low level of fixed nitrogen. The chain is Nitrogen fixation regulatory protein (nifL) from Klebsiella pneumoniae.